Consider the following 344-residue polypeptide: MIKVGIVGGTGYTGVELLRLLAQHPQARVEVITSRSEAGVKVADMYPNLRGHYDDLQFSVPDVQRLGACDVVFFATPHGVAHALAGELLDAGTRVIDLSADFRLADAEEWARWYGQPHGAPALLDEAVYGLPEVNREKIRQARLIAVPGCYPTATQLGLIPLLEAGLADASRLIADCKSGVSGAGRGAKVGSLFCEAGESMMAYAVKGHRHLPEISQGLCRASGGDVGLTFVPHLTPMIRGIHATLYAHVADRSVDLQALFEKRYADEPFVDVMPAGSHPETRSVRGANVCRIAVHRPQGGDLVVVLSVIDNLVKGASGQALQNMNILFGLDERLGLSHAALLP.

Cys150 is a catalytic residue.

This sequence belongs to the NAGSA dehydrogenase family. Type 1 subfamily.

It is found in the cytoplasm. The enzyme catalyses N-acetyl-L-glutamate 5-semialdehyde + phosphate + NADP(+) = N-acetyl-L-glutamyl 5-phosphate + NADPH + H(+). Its pathway is amino-acid biosynthesis; L-arginine biosynthesis; N(2)-acetyl-L-ornithine from L-glutamate: step 3/4. Its function is as follows. Catalyzes the NADPH-dependent reduction of N-acetyl-5-glutamyl phosphate to yield N-acetyl-L-glutamate 5-semialdehyde. In Pseudomonas aeruginosa (strain UCBPP-PA14), this protein is N-acetyl-gamma-glutamyl-phosphate reductase.